Consider the following 361-residue polypeptide: Phosphoserine aminotransferase (361 aa).

An L-glutamate-binding site is contributed by R43. Pyridoxal 5'-phosphate is bound by residues 77-78 (AS), W103, T153, D173, and Q196. K197 is subject to N6-(pyridoxal phosphate)lysine. Position 238–239 (238–239 (NT)) interacts with pyridoxal 5'-phosphate.

This sequence belongs to the class-V pyridoxal-phosphate-dependent aminotransferase family. SerC subfamily. As to quaternary structure, homodimer. It depends on pyridoxal 5'-phosphate as a cofactor.

Its subcellular location is the cytoplasm. The catalysed reaction is O-phospho-L-serine + 2-oxoglutarate = 3-phosphooxypyruvate + L-glutamate. It carries out the reaction 4-(phosphooxy)-L-threonine + 2-oxoglutarate = (R)-3-hydroxy-2-oxo-4-phosphooxybutanoate + L-glutamate. Its pathway is amino-acid biosynthesis; L-serine biosynthesis; L-serine from 3-phospho-D-glycerate: step 2/3. The protein operates within cofactor biosynthesis; pyridoxine 5'-phosphate biosynthesis; pyridoxine 5'-phosphate from D-erythrose 4-phosphate: step 3/5. Functionally, catalyzes the reversible conversion of 3-phosphohydroxypyruvate to phosphoserine and of 3-hydroxy-2-oxo-4-phosphonooxybutanoate to phosphohydroxythreonine. The sequence is that of Phosphoserine aminotransferase from Pseudomonas aeruginosa (strain LESB58).